Here is an 835-residue protein sequence, read N- to C-terminus: Lon protease (835 aa).

In terms of domain architecture, Lon N-terminal spans 4-224 (LPYIAIRNQL…LAINMLINAI (221 aa)). 412 to 419 (GPPGTGKT) provides a ligand contact to ATP. Positions 649–832 (QPKAGVVNAL…DEIFKYIFEA (184 aa)) constitute a Lon proteolytic domain. Residues Ser738 and Lys781 contribute to the active site.

It belongs to the peptidase S16 family. As to quaternary structure, homohexamer. Organized in a ring with a central cavity.

The protein localises to the cytoplasm. The catalysed reaction is Hydrolysis of proteins in presence of ATP.. Its function is as follows. ATP-dependent serine protease that mediates the selective degradation of mutant and abnormal proteins as well as certain short-lived regulatory proteins. Required for cellular homeostasis and for survival from DNA damage and developmental changes induced by stress. Degrades polypeptides processively to yield small peptide fragments that are 5 to 10 amino acids long. Binds to DNA in a double-stranded, site-specific manner. In Metamycoplasma arthritidis (strain 158L3-1) (Mycoplasma arthritidis), this protein is Lon protease.